The sequence spans 211 residues: MTAAASTLALNLARKLYETGIRSQSVLSAVANTPRELFLDNALAHKAYENTALPIGQGQTISQPYIVARMTELLLQTQPNKVLEIGTGSGYQAAILAQLVPQLCTIERIKALQIQARQRLKRLDLHNVSFKYGDGWQGWHNKGPFDGILVTAAASKVPEALLAQLSDGGVLLIPVGEDAQQLLKITRTGQSFESQIIEAVKFVPLINGELA.

The active site involves Ser62.

Belongs to the methyltransferase superfamily. L-isoaspartyl/D-aspartyl protein methyltransferase family.

The protein localises to the cytoplasm. It carries out the reaction [protein]-L-isoaspartate + S-adenosyl-L-methionine = [protein]-L-isoaspartate alpha-methyl ester + S-adenosyl-L-homocysteine. Functionally, catalyzes the methyl esterification of L-isoaspartyl residues in peptides and proteins that result from spontaneous decomposition of normal L-aspartyl and L-asparaginyl residues. It plays a role in the repair and/or degradation of damaged proteins. The protein is Protein-L-isoaspartate O-methyltransferase of Shewanella denitrificans (strain OS217 / ATCC BAA-1090 / DSM 15013).